We begin with the raw amino-acid sequence, 209 residues long: MASMGLQVTGIALAVLGWLAVMLCCALPMWRVTAFIGSNIVTSQTIWEGLWMNCVVQSTGQMQCKVYDSLLALPQDLQAARALVIISIIVAALGVLLSVVGGKCTNCLEDESAKAKTMIVAGVVFLLAGLLVIVPVSWTAHNIIQDFYNPLVASGQKREMGASLYVGWAASGLLLLGGGLLCCNCPPRTDKPYSAKYSAARSAAASNYV.

Residues 1–9 (MASMGLQVT) are Cytoplasmic-facing. An interaction with EPHA2 region spans residues 1-103 (MASMGLQVTG…GVLLSVVGGK (103 aa)). A helical membrane pass occupies residues 10–30 (GIALAVLGWLAVMLCCALPMW). Over 31 to 81 (RVTAFIGSNIVTSQTIWEGLWMNCVVQSTGQMQCKVYDSLLALPQDLQAAR) the chain is Extracellular. A disulfide bond links C54 and C64. A helical transmembrane segment spans residues 82–102 (ALVIISIIVAALGVLLSVVGG). The Cytoplasmic segment spans residues 103 to 117 (KCTNCLEDESAKAKT). A helical transmembrane segment spans residues 118–138 (MIVAGVVFLLAGLLVIVPVSW). Residues 139–160 (TAHNIIQDFYNPLVASGQKREM) lie on the Extracellular side of the membrane. A helical membrane pass occupies residues 161 to 181 (GASLYVGWAASGLLLLGGGLL). Topologically, residues 182–209 (CCNCPPRTDKPYSAKYSAARSAAASNYV) are cytoplasmic. Position 208 is a phosphotyrosine; by EPHA2 (Y208). The segment at 208 to 209 (YV) is interactions with TJP1, TJP2 and TJP3.

The protein belongs to the claudin family. As to quaternary structure, interacts with EPHA2; phosphorylates CLDN4 and may regulate tight junctions. Directly interacts with TJP1/ZO-1, TJP2/ZO-2 and TJP3/ZO-3. Interacts with CLDN1. Interacts with CLDN8. In terms of processing, phosphorylated. Phosphorylation by EPHA2 is stimulated by EFNA1 and alters interaction with TJP1.

The protein localises to the cell junction. The protein resides in the tight junction. It localises to the cell membrane. Its function is as follows. Channel-forming tight junction protein that mediates paracellular chloride transport in the kidney. Plays a critical role in the paracellular reabsorption of filtered chloride in the kidney collecting ducts. Claudins play a major role in tight junction-specific obliteration of the intercellular space, through calcium-independent cell-adhesion activity. The sequence is that of Claudin-4 (CLDN4) from Chlorocebus aethiops (Green monkey).